Consider the following 452-residue polypeptide: Cobyrinate a,c-diamide synthase (452 aa).

Residues 246–439 (TLAYALDDAF…LHVHFYQDEQ (194 aa)) form the GATase cobBQ-type domain. Cys-328 acts as the Nucleophile in catalysis.

It belongs to the CobB/CbiA family. Mg(2+) is required as a cofactor.

The catalysed reaction is cob(II)yrinate + 2 L-glutamine + 2 ATP + 2 H2O = cob(II)yrinate a,c diamide + 2 L-glutamate + 2 ADP + 2 phosphate + 2 H(+). Its pathway is cofactor biosynthesis; adenosylcobalamin biosynthesis; cob(II)yrinate a,c-diamide from sirohydrochlorin (anaerobic route): step 10/10. Catalyzes the ATP-dependent amidation of the two carboxylate groups at positions a and c of cobyrinate, using either L-glutamine or ammonia as the nitrogen source. The chain is Cobyrinate a,c-diamide synthase from Streptococcus sanguinis (strain SK36).